We begin with the raw amino-acid sequence, 67 residues long: Penaeidin-4c (67 aa).

Residues 1–19 (MRLVVCLVFLASFALVCQG) form the signal peptide. 3 disulfides stabilise this stretch: Cys-42-Cys-56, Cys-45-Cys-63, and Cys-57-Cys-64. An Arginine amide modification is found at Arg-66.

The protein belongs to the penaeidin family.

The protein resides in the cytoplasmic granule. Its function is as follows. Antibacterial and antifungal activity. Presents chitin-binding activity. In Penaeus vannamei (Whiteleg shrimp), this protein is Penaeidin-4c.